A 333-amino-acid chain; its full sequence is Arginase (333 aa).

Met1 is subject to N-acetylmethionine. Ser16 is modified (phosphoserine). Residue Thr77 is modified to Phosphothreonine. 4 residues coordinate Mn(2+): His123, Asp146, His148, and Asp150. Residues 148 to 152, 159 to 161, and Asp205 each bind substrate; these read HADIN and SGN. Residues Asp256 and Asp258 each coordinate Mn(2+). Thr270 carries the phosphothreonine modification. Residues Thr270 and Glu301 each contribute to the substrate site.

Belongs to the arginase family. In terms of assembly, homotrimer. The cofactor is Mn(2+).

The enzyme catalyses L-arginine + H2O = urea + L-ornithine. The protein operates within nitrogen metabolism; urea cycle; L-ornithine and urea from L-arginine: step 1/1. The sequence is that of Arginase (CAR1) from Saccharomyces cerevisiae (strain ATCC 204508 / S288c) (Baker's yeast).